The chain runs to 1127 residues: Nck-associated protein 1-like (1127 aa).

Positions 638–670 (KAKNKKTRKQRQTPRKGEPERDKPGAESHRKNR) are disordered. The span at 639–651 (AKNKKTRKQRQTP) shows a compositional bias: basic residues. Basic and acidic residues predominate over residues 652–666 (RKGEPERDKPGAESH). A helical membrane pass occupies residues 996–1016 (VACLLLIFLAVSLPLLATDPS).

It belongs to the HEM-1/HEM-2 family. As to quaternary structure, in hematopoietic cells, component of the WAVE2 complex composed of ABI1, CYFIP1/SRA1, NCKAP1L/HEM1 and WASF2/WAVE2. Interacts with ARHGAP4, PIK3C3/VPS34 and PPP1R12A/MYPT1. Interacts with mammalian target of rapamycin complex 2 (mTORC2) components, including MTOR and RICTOR. Expressed only in cells of hematopoietic origin. Expressed in neutrophils (at protein level). Expressed in T-cells (at protein level).

Its subcellular location is the cell membrane. The protein resides in the cytoplasm. Essential hematopoietic-specific regulator of the actin cytoskeleton. Controls lymphocyte development, activation, proliferation and homeostasis, erythrocyte membrane stability, as well as phagocytosis and migration by neutrophils and macrophages. Component of the WAVE2 complex which signals downstream of RAC to stimulate F-actin polymerization. Required for stabilization and/or translation of the WAVE2 complex proteins in hematopoietic cells. Within the WAVE2 complex, enables the cortical actin network to restrain excessive degranulation and granule release by T-cells. Required for efficient T-lymphocyte and neutrophil migration. Exhibits complex cycles of activation and inhibition to generate waves of propagating the assembly with actin. Also involved in mechanisms WAVE-independent to regulate myosin and actin polymerization during neutrophil chemotaxis. In T-cells, required for proper mechanistic target of rapamycin complex 2 (mTORC2)-dependent AKT phosphorylation, cell proliferation and cytokine secretion, including that of IL2 and TNF. The polypeptide is Nck-associated protein 1-like (Homo sapiens (Human)).